We begin with the raw amino-acid sequence, 228 residues long: Biosynthetic peptidoglycan transglycosylase (228 aa).

Residues 8–28 (GVAALLALFLLYQLWIFGHIV) form a helical membrane-spanning segment.

Belongs to the glycosyltransferase 51 family.

The protein resides in the cell inner membrane. It catalyses the reaction [GlcNAc-(1-&gt;4)-Mur2Ac(oyl-L-Ala-gamma-D-Glu-L-Lys-D-Ala-D-Ala)](n)-di-trans,octa-cis-undecaprenyl diphosphate + beta-D-GlcNAc-(1-&gt;4)-Mur2Ac(oyl-L-Ala-gamma-D-Glu-L-Lys-D-Ala-D-Ala)-di-trans,octa-cis-undecaprenyl diphosphate = [GlcNAc-(1-&gt;4)-Mur2Ac(oyl-L-Ala-gamma-D-Glu-L-Lys-D-Ala-D-Ala)](n+1)-di-trans,octa-cis-undecaprenyl diphosphate + di-trans,octa-cis-undecaprenyl diphosphate + H(+). Its pathway is cell wall biogenesis; peptidoglycan biosynthesis. Functionally, peptidoglycan polymerase that catalyzes glycan chain elongation from lipid-linked precursors. This is Biosynthetic peptidoglycan transglycosylase from Laribacter hongkongensis (strain HLHK9).